We begin with the raw amino-acid sequence, 206 residues long: Lipid A acyltransferase PagP (206 aa).

Residues 1-22 (MKQMVCWLTAGLLTLGGLPARA) form the signal peptide. Residues 26–46 (VPAVPETPAAPAAPAVQETPA) are compositionally biased toward low complexity. Residues 26–50 (VPAVPETPAAPAAPAVQETPASSAA) form a disordered region. Active-site residues include H80, D123, and S124.

The protein belongs to the lipid A palmitoyltransferase family. In terms of assembly, homodimer.

Its subcellular location is the cell outer membrane. The enzyme catalyses a lipid A + a 1,2-diacyl-sn-glycero-3-phosphocholine = a hepta-acyl lipid A + a 2-acyl-sn-glycero-3-phosphocholine. It catalyses the reaction a lipid IVA + a 1,2-diacyl-sn-glycero-3-phosphocholine = a lipid IVB + a 2-acyl-sn-glycero-3-phosphocholine. The catalysed reaction is a lipid IIA + a 1,2-diacyl-sn-glycero-3-phosphocholine = a lipid IIB + a 2-acyl-sn-glycero-3-phosphocholine. Transfers a fatty acid residue from the sn-1 position of a phospholipid to the N-linked hydroxyfatty acid chain on the proximal unit of lipid A or its precursors. The protein is Lipid A acyltransferase PagP of Laribacter hongkongensis (strain HLHK9).